Here is a 664-residue protein sequence, read N- to C-terminus: L-type lectin-domain containing receptor kinase I.3 (664 aa).

Residues 1–21 form the signal peptide; that stretch reads MACRLYLALIFSCVYLICLSS. The Extracellular portion of the chain corresponds to 22-286; it reads QQETGFVYNG…PKEEKKKLSP (265 aa). The interval 24–257 is legume-lectin like; sequence ETGFVYNGFE…NHYILGWSFS (234 aa). N-linked (GlcNAc...) asparagine glycans are attached at residues Asn55, Asn125, Asn128, Asn181, Asn204, Asn225, and Asn267. Residues 287–307 traverse the membrane as a helical segment; the sequence is LLIGLVILLVIPVVMVLGGVY. The Cytoplasmic segment spans residues 308–664; that stretch reads WYRRKKYAEV…THTILDGHGR (357 aa). One can recognise a Protein kinase domain in the interval 342–619; that stretch reads FRKDCRVGKG…LNQDLPLPIF (278 aa). Residues 348–356 and Lys370 each bind ATP; that span reads VGKGGFGEV. Residue Asp466 is the Proton acceptor of the active site.

This sequence in the C-terminal section; belongs to the protein kinase superfamily. Ser/Thr protein kinase family. In the N-terminal section; belongs to the leguminous lectin family. In terms of processing, autophosphorylated on Ser and Thr residues. In terms of tissue distribution, mostly expressed in roots and flowers, and, to a lower extent, in leaves.

The protein resides in the cell membrane. It catalyses the reaction L-seryl-[protein] + ATP = O-phospho-L-seryl-[protein] + ADP + H(+). The catalysed reaction is L-threonyl-[protein] + ATP = O-phospho-L-threonyl-[protein] + ADP + H(+). Its function is as follows. Involved in resistance response to the pathogenic fungus Alternaria brassicicola. In Arabidopsis thaliana (Mouse-ear cress), this protein is L-type lectin-domain containing receptor kinase I.3.